The primary structure comprises 358 residues: Envelope glycoprotein K (358 aa).

The signal sequence occupies residues 1–33 (MSRVQCLRLAAVIASISHLIFLVWFVCWNSVLE). Topologically, residues 34 to 141 (NNEDCVYATR…LEMADCMAYL (108 aa)) are extracellular. Residues N57 and N80 are each glycosylated (N-linked (GlcNAc...) asparagine; by host). The chain crosses the membrane as a helical span at residues 142–162 (WFFQVRTATAALLMYLAFLCV). Topologically, residues 163 to 235 (NRQRRGFGPW…DTLGFYLMHP (73 aa)) are cytoplasmic. A helical transmembrane segment spans residues 236–256 (LALLLRAIETILYFASLVASA). The Extracellular segment spans residues 257 to 273 (TVLRVNFDPCSVVLPNH). The helical transmembrane segment at 274–294 (VKVFAWVFVAALGALEVVSAI) threads the bilayer. Residues 295-323 (DHLRRETRSARDAAAVIRPTNIIAACCAN) lie on the Cytoplasmic side of the membrane. A helical membrane pass occupies residues 324 to 344 (IISHVLLRMLYGAALVLVVIG). At 345-358 (ALKYEREIQTRLLG) the chain is on the extracellular side.

The protein belongs to the alphaherpesvirinae glycoprotein K family. In terms of assembly, interacts (via UL20 interaction region) with protein UL20 (via N-terminus); this interaction probably plays a role in the coordinate transport of protein UL20 and gK to the trans-Golgi network (TGN), and is required for the cell surface expression of gK.

It is found in the host cell membrane. The protein localises to the host endosome membrane. Its subcellular location is the host Golgi apparatus membrane. Its function is as follows. Glycoprotein that probably modulates membrane fusion events during secondary envelopment of cytoplasmic capsids that bud into specific trans-Golgi network (TGN)-derived membranes. Also plays a role, together with gB, in virus-induced cell-to-cell fusion (syncytia formation). Seems to block fusion of virions with infected-cell membranes. This chain is Envelope glycoprotein K (gK), found in Psittacid herpesvirus 1 (isolate Amazon parrot/-/97-0001/1997) (PsHV-1).